A 78-amino-acid chain; its full sequence is MEKLTILLLLAAVLVLAQALIKKGGGEKRQKEKINFLSKRKTTAESWWEGECSGWSVYCTSDPECCSGECSSYYCELW.

Positions M1 to A19 are cleaved as a signal peptide. Positions L20–S38 are excised as a propeptide. Cystine bridges form between C52–C66, C59–C70, and C65–C75.

It belongs to the conotoxin O2 superfamily. Expressed by the venom duct.

It is found in the secreted. This Conus tessulatus (Tessellate cone) protein is Conotoxin TsMEKL-P012.